A 385-amino-acid chain; its full sequence is Succinyl-diaminopimelate desuccinylase (385 aa).

His-73 is a Zn(2+) binding site. The active site involves Asp-75. Asp-106 is a binding site for Zn(2+). The Proton acceptor role is filled by Glu-141. The Zn(2+) site is built by Glu-142, Glu-170, and His-359.

This sequence belongs to the peptidase M20A family. DapE subfamily. As to quaternary structure, homodimer. It depends on Zn(2+) as a cofactor. Co(2+) serves as cofactor.

It catalyses the reaction N-succinyl-(2S,6S)-2,6-diaminopimelate + H2O = (2S,6S)-2,6-diaminopimelate + succinate. It functions in the pathway amino-acid biosynthesis; L-lysine biosynthesis via DAP pathway; LL-2,6-diaminopimelate from (S)-tetrahydrodipicolinate (succinylase route): step 3/3. Its function is as follows. Catalyzes the hydrolysis of N-succinyl-L,L-diaminopimelic acid (SDAP), forming succinate and LL-2,6-diaminopimelate (DAP), an intermediate involved in the bacterial biosynthesis of lysine and meso-diaminopimelic acid, an essential component of bacterial cell walls. In Methylorubrum extorquens (strain PA1) (Methylobacterium extorquens), this protein is Succinyl-diaminopimelate desuccinylase.